Consider the following 260-residue polypeptide: Hydroxyethylthiazole kinase (260 aa).

Residue methionine 38 coordinates substrate. ATP contacts are provided by arginine 114 and threonine 159. Residue glycine 186 coordinates substrate.

The protein belongs to the Thz kinase family. Requires Mg(2+) as cofactor.

The catalysed reaction is 5-(2-hydroxyethyl)-4-methylthiazole + ATP = 4-methyl-5-(2-phosphooxyethyl)-thiazole + ADP + H(+). It functions in the pathway cofactor biosynthesis; thiamine diphosphate biosynthesis; 4-methyl-5-(2-phosphoethyl)-thiazole from 5-(2-hydroxyethyl)-4-methylthiazole: step 1/1. Its function is as follows. Catalyzes the phosphorylation of the hydroxyl group of 4-methyl-5-beta-hydroxyethylthiazole (THZ). In Helicobacter pylori (strain G27), this protein is Hydroxyethylthiazole kinase.